The primary structure comprises 451 residues: POU domain, class 3, transcription factor 1 (451 aa).

5 disordered regions span residues 1 to 21, 69 to 114, 127 to 154, 186 to 253, and 395 to 451; these read MATT…GTGP, AHPQ…GFHA, AWAQ…HQPQ, GLHH…PSSD, and KRMT…GSVQ. Gly residues-rich tracts occupy residues 11–20, 76–85, and 95–112; these read GPGGGAGGTG, TGGGGGGDWA, and AGGG…GGGF. Residues 190–199 are compositionally biased toward basic and acidic residues; that stretch reads ALHEDGHEAQ. The segment covering 220 to 232 has biased composition (low complexity); that stretch reads AGGLHAAAAHLHP. The POU-specific domain maps to 247–321; sequence EDAPSSDDLE…LLNKWLEETD (75 aa). Positions 339–398 form a DNA-binding region, homeobox; sequence KRKKRTSIEVGVKGALESHFLKCPKPSAHEITGLADSLQLEKEVVRVWFCNRRQKEKRMT. A compositionally biased stretch (pro residues) spans 427 to 436; that stretch reads PSAPPPPPPA.

Belongs to the POU transcription factor family. Class-3 subfamily. As to expression, expressed in embryonal stem cells and in the developing brain.

Its subcellular location is the nucleus. In terms of biological role, transcription factor that binds to the octamer motif (5'-ATTTGCAT-3'). Acts as a transcriptional activator when binding cooperatively with SOX4, SOX11, or SOX12 to gene promoters. Acts as a transcriptional repressor of myelin-specific genes. The sequence is that of POU domain, class 3, transcription factor 1 (POU3F1) from Homo sapiens (Human).